The chain runs to 473 residues: ATP synthase subunit beta (473 aa).

158–165 is a binding site for ATP; that stretch reads GGAGVGKT.

It belongs to the ATPase alpha/beta chains family. F-type ATPases have 2 components, CF(1) - the catalytic core - and CF(0) - the membrane proton channel. CF(1) has five subunits: alpha(3), beta(3), gamma(1), delta(1), epsilon(1). CF(0) has three main subunits: a(1), b(2) and c(9-12). The alpha and beta chains form an alternating ring which encloses part of the gamma chain. CF(1) is attached to CF(0) by a central stalk formed by the gamma and epsilon chains, while a peripheral stalk is formed by the delta and b chains.

It is found in the cell membrane. It catalyses the reaction ATP + H2O + 4 H(+)(in) = ADP + phosphate + 5 H(+)(out). Functionally, produces ATP from ADP in the presence of a proton gradient across the membrane. The catalytic sites are hosted primarily by the beta subunits. The protein is ATP synthase subunit beta of Priestia megaterium (strain ATCC 12872 / QMB1551) (Bacillus megaterium).